The chain runs to 194 residues: MKKERLMSINKEKAEAAIYQFLEAIGENPNREGLLDTPKRVAKMYAEMFLGLGKDPKEEFTAVFKEQHEDVVIVKGISFYSICEHHLVPFYGKAHIAYLPSDGRVTGLSKLARAVEVASKRPQLQERLTSQIADALVEALNPKGTLVMVEAEHMCMTMRGIKKPGSKTITTTARGLYKESRAERQEVISLMTKD.

The Zn(2+) site is built by Cys83, His86, and Cys155.

Belongs to the GTP cyclohydrolase I family. In terms of assembly, homomer.

It catalyses the reaction GTP + H2O = 7,8-dihydroneopterin 3'-triphosphate + formate + H(+). It functions in the pathway cofactor biosynthesis; 7,8-dihydroneopterin triphosphate biosynthesis; 7,8-dihydroneopterin triphosphate from GTP: step 1/1. The protein is GTP cyclohydrolase 1 of Streptococcus pyogenes serotype M49 (strain NZ131).